The chain runs to 217 residues: Phosphoenolpyruvate guanylyltransferase (217 aa).

Threonine 150, glycine 165, and serine 168 together coordinate phosphoenolpyruvate.

The protein belongs to the CofC family.

It carries out the reaction phosphoenolpyruvate + GTP + H(+) = enolpyruvoyl-2-diphospho-5'-guanosine + diphosphate. The protein operates within cofactor biosynthesis; coenzyme F420 biosynthesis. Guanylyltransferase that catalyzes the activation of phosphoenolpyruvate (PEP) as enolpyruvoyl-2-diphospho-5'-guanosine, via the condensation of PEP with GTP. It is involved in the biosynthesis of coenzyme F420, a hydride carrier cofactor. This Mycobacterium marinum (strain ATCC BAA-535 / M) protein is Phosphoenolpyruvate guanylyltransferase.